The primary structure comprises 423 residues: MFHRHLCKLCSKTPSAATLASPLGKLQEERGEGVAKDLKKDKQHRQIFLQKFRERLDSDTTGKNTLAGFIDLPEGISPTMAAVGPLKRGEEPLPPWLKMKVAKGVSRLPRFNSIRKSMREKRLATVCEEAKCPNIGECWGGDEEEGTATATIMVMGSHCTRGCRFCSVLTSRTPPPLDPDEPQKVANAVAEMGVDYIVMTMVDRDDLNDGGAAHVVRCVNAIKEKNPLLLLEALVGDFHGDLKLVETVALSPLSVYAHNIECVERITPNVRDRRASYRQSLKVLEHVNSFTKGAMLTKSSIMLGLGEKEEEVRQTLRDLRTAGVSAVTLGQYLQPARTRLKVSRYAHPKEFQMWEEEAMAMGFLYCASGPLVRSSYRAGEYYIKSLVKQRGAAATKSNTTTTTTNTASLAAATVTDSATLQGE.

7 residues coordinate [4Fe-4S] cluster: C127, C132, C138, C159, C163, C166, and S375. Residues 142–364 enclose the Radical SAM core domain; sequence DEEEGTATAT…EEEAMAMGFL (223 aa).

It belongs to the radical SAM superfamily. Lipoyl synthase family. [4Fe-4S] cluster is required as a cofactor.

It localises to the mitochondrion. It carries out the reaction [[Fe-S] cluster scaffold protein carrying a second [4Fe-4S](2+) cluster] + N(6)-octanoyl-L-lysyl-[protein] + 2 oxidized [2Fe-2S]-[ferredoxin] + 2 S-adenosyl-L-methionine + 4 H(+) = [[Fe-S] cluster scaffold protein] + N(6)-[(R)-dihydrolipoyl]-L-lysyl-[protein] + 4 Fe(3+) + 2 hydrogen sulfide + 2 5'-deoxyadenosine + 2 L-methionine + 2 reduced [2Fe-2S]-[ferredoxin]. It functions in the pathway protein modification; protein lipoylation via endogenous pathway; protein N(6)-(lipoyl)lysine from octanoyl-[acyl-carrier-protein]: step 2/2. In terms of biological role, catalyzes the radical-mediated insertion of two sulfur atoms into the C-6 and C-8 positions of the octanoyl moiety bound to the lipoyl domains of lipoate-dependent enzymes, thereby converting the octanoylated domains into lipoylated derivatives. This chain is Lipoyl synthase 1, mitochondrial, found in Trypanosoma cruzi (strain CL Brener).